Reading from the N-terminus, the 584-residue chain is Poly(A) RNA polymerase protein 2 (584 aa).

A compositionally biased stretch (polar residues) spans 1-11 (MGAKSVTASSS). Disordered stretches follow at residues 1–63 (MGAK…LPKD) and 81–147 (EGFD…QELE). The span at 12–35 (KKIKNRHNGKVKKSKKIKKVRKPQ) shows a compositional bias: basic residues. Over residues 53 to 63 (NEQETNKLPKD) the composition is skewed to basic and acidic residues. Acidic residues predominate over residues 130-139 (SEDEQAEQEE). The Mg(2+) site is built by Asp-236 and Asp-238. The ATP site is built by Gly-301, Lys-326, Asn-431, and Arg-435. The PAP-associated domain occupies 371–431 (NLGVLLIEFF…AIQDPGDESN (61 aa)). Residues 525-584 (TSTATATTTDDDYEITNPPAKKAKIEEKPESEPAKRNSGETYITVSSEDDDEDGYNPYTL) are disordered. Over residues 547–562 (AKIEEKPESEPAKRNS) the composition is skewed to basic and acidic residues.

Belongs to the DNA polymerase type-B-like family. Component of the TRAMP complex (also called TRF4 complex) composed of at least HUL4, MTR4, PAP2/TRF4 and either AIR1 or AIR2. Interacts with NOP53 and POL2. Interacts directly with AIR2. Mg(2+) is required as a cofactor. It depends on Mn(2+) as a cofactor.

It localises to the nucleus. The catalysed reaction is RNA(n) + ATP = RNA(n)-3'-adenine ribonucleotide + diphosphate. Its function is as follows. Catalytic subunit of the TRAMP complex which has a poly(A) RNA polymerase activity and is involved in a post-transcriptional quality control mechanism limiting inappropriate expression of genetic information. Polyadenylation is required for the degradative activity of the exosome on several of its nuclear RNA substrates like cryptic transcripts generated by RNA polymerase II and III, or hypomethylated pre-tRNAi-Met. Polyadenylates RNA processing and degradation intermediates of snRNAs, snoRNAs and mRNAs that accumulate in strains lacking a functional exosome. TRF4 is also required for proper nuclear division in mitosis, DNA damage repair and sister chromatid cohesion. Involved in the regulation of histone mRNA levels. May mediate mitotic chromosome condensation. The chain is Poly(A) RNA polymerase protein 2 (PAP2) from Saccharomyces cerevisiae (strain ATCC 204508 / S288c) (Baker's yeast).